The chain runs to 121 residues: Large ribosomal subunit protein uL14c (121 aa).

This sequence belongs to the universal ribosomal protein uL14 family. As to quaternary structure, part of the 50S ribosomal subunit.

Its subcellular location is the plastid. The protein localises to the chloroplast. Its function is as follows. Binds to 23S rRNA. This chain is Large ribosomal subunit protein uL14c, found in Tetradesmus obliquus (Green alga).